The chain runs to 162 residues: Shikimate kinase (162 aa).

Residue 10–15 participates in ATP binding; the sequence is GAGKST. S14 lines the Mg(2+) pocket. The substrate site is built by D28, R52, and G73. An ATP-binding site is contributed by R113. R129 is a binding site for substrate.

The protein belongs to the shikimate kinase family. As to quaternary structure, monomer. Mg(2+) serves as cofactor.

It is found in the cytoplasm. The enzyme catalyses shikimate + ATP = 3-phosphoshikimate + ADP + H(+). The protein operates within metabolic intermediate biosynthesis; chorismate biosynthesis; chorismate from D-erythrose 4-phosphate and phosphoenolpyruvate: step 5/7. In terms of biological role, catalyzes the specific phosphorylation of the 3-hydroxyl group of shikimic acid using ATP as a cosubstrate. In Lactococcus lactis subsp. cremoris (strain SK11), this protein is Shikimate kinase.